The sequence spans 217 residues: MTALPFPVAEEPDAFTAETGRKLFAGPSEFVKGVVAMSGLPPADRVEVCFAGRSNVGKSSLINALTGTKGLARASNTPGRTQEINFFTQGPELYLVDLPGYGYANAPLKVVEKWQKLLKQYLSGRQTLRRAFVLIDARHGVKAVDDEIMKLLDTSAVTFQCVLTKADKVKAAERDKVLAQVRAALAKHPAAYPEIVLTSSEKGDGIATLRSIIAHLE.

Residues 44–217 (DRVEVCFAGR…TLRSIIAHLE (174 aa)) enclose the EngB-type G domain. GTP is bound by residues 52-59 (GRSNVGKS), 79-83 (GRTQE), 97-100 (DLPG), 164-167 (TKAD), and 198-200 (TSS). Mg(2+) is bound by residues Ser59 and Thr81.

This sequence belongs to the TRAFAC class TrmE-Era-EngA-EngB-Septin-like GTPase superfamily. EngB GTPase family. It depends on Mg(2+) as a cofactor.

Functionally, necessary for normal cell division and for the maintenance of normal septation. The chain is Probable GTP-binding protein EngB from Ruegeria pomeroyi (strain ATCC 700808 / DSM 15171 / DSS-3) (Silicibacter pomeroyi).